Consider the following 183-residue polypeptide: MQDSILTTVVKDIDGEVTTLEKFAGNVLLIVNVASKCGLTPQYEQLENIQKAWVDRGFMVLGFPCNQFLEQEPGSDEEIKTYCTTTWGVTFPMFSKIEVNGEGRHPLYQKLIAAAPTAVAPEESGFYARMVSKGRAPLYPDDILWNFEKFLVGRDGKVIQRFSPDMTPEDPIVMESIKLALAK.

Cys37 is an active-site residue.

It belongs to the glutathione peroxidase family. BtuE subfamily.

Its subcellular location is the periplasm. The catalysed reaction is 2 glutathione + H2O2 = glutathione disulfide + 2 H2O. The enzyme catalyses a hydroperoxide + [thioredoxin]-dithiol = an alcohol + [thioredoxin]-disulfide + H2O. Non-specific peroxidase that can use thioredoxin or glutathione as a reducing agent. In vitro, utilizes preferentially thioredoxin A to decompose hydrogen peroxide as well as cumene-, tert-butyl-, and linoleic acid hydroperoxides, suggesting that it may have one or more organic hydroperoxide as its physiological substrate. This is Thioredoxin/glutathione peroxidase BtuE from Escherichia coli (strain K12).